A 382-amino-acid chain; its full sequence is Gap junction alpha-1 protein (382 aa).

Residues 2-23 (GDWSALGKLLDKVQAYSTAGGK) lie on the Cytoplasmic side of the membrane. Position 5 is a phosphoserine (serine 5). Residues 24–44 (VWLSVLFIFRILLLGTAVESA) form a helical membrane-spanning segment. The Extracellular segment spans residues 45 to 76 (WGDEQSAFRCNTQQPGCENVCYDKSFPISHVR). Disulfide bonds link cysteine 54–cysteine 192 and cysteine 187–cysteine 198. The chain crosses the membrane as a helical span at residues 77–97 (FWVLQIIFVSVPTLLYLAHVF). Residues 98–155 (YVMRKEEKLNKKEEELKVAQTDGVNVEMHLKQIEIKKFKYGIEEHGKVKMRGGLLRTY) are Cytoplasmic-facing. Residue lysine 144 forms a Glycyl lysine isopeptide (Lys-Gly) (interchain with G-Cter in SUMO) linkage. A helical transmembrane segment spans residues 156–176 (IISILFKSVFEVAFLLIQWYI). The Extracellular portion of the chain corresponds to 177–207 (YGFSLSAVYTCKRDPCPHQVDCFLSRPTEKT). Residues 208 to 228 (IFIIFMLVVSLVSLALNIIEL) form a helical membrane-spanning segment. Residues 229–382 (FYVFFKGVKD…SRPRPDDLEI (154 aa)) are Cytoplasmic-facing. Lysine 237 is covalently cross-linked (Glycyl lysine isopeptide (Lys-Gly) (interchain with G-Cter in SUMO)). The interval 244 to 382 (SDPYHATTGP…SRPRPDDLEI (139 aa)) is interaction with NOV. Position 247 is a phosphotyrosine (tyrosine 247). Phosphoserine is present on residues serine 255, serine 257, and serine 262. The segment at 264 to 382 (KYAYFNGCSS…SRPRPDDLEI (119 aa)) is interaction with UBQLN4. At cysteine 271 the chain carries S-nitrosocysteine. Threonine 275 bears the Phosphothreonine mark. Phosphoserine is present on residues serine 306, serine 314, and serine 325. Positions 317 to 332 (QNRMGQAGSTISNSHA) are enriched in polar residues. The tract at residues 317–382 (QNRMGQAGST…SRPRPDDLEI (66 aa)) is disordered. Threonine 326 is subject to Phosphothreonine. 3 positions are modified to phosphoserine: serine 328, serine 330, and serine 365. Residues 362–374 (RPSSRASSRASSR) are compositionally biased toward low complexity. Serine 368 bears the Phosphoserine; by PKC/PRKCG and PKC/PRKCD mark. 2 positions are modified to phosphoserine: serine 369 and serine 373.

It belongs to the connexin family. Alpha-type (group II) subfamily. In terms of assembly, a connexon is composed of a hexamer of connexins. Interacts with SGSM3. Interacts with RIC1/CIP150. Interacts with CNST and CSNK1D. Interacts (via C-terminus) with TJP1. Interacts (via C-terminus) with SRC (via SH3 domain). Interacts (not ubiquitinated) with UBQLN4 (via UBA domain). Interacts with NOV. Interacts with TMEM65. Interacts with ANK3/ANKG and PKP2. Post-translationally, contains at least one intramolecular disulfide bond. Phosphorylation at Ser-325, Ser-328 and Ser-330 by CK1 modulates gap junction assembly. Phosphorylated at Ser-368 by PRKCG; phosphorylation induces disassembly of gap junction plaques and inhibition of gap junction activity. Phosphorylation at Ser-368 by PRKCD triggers its internalization into small vesicles leading to proteasome-mediated degradation. In terms of processing, sumoylated with SUMO1, SUMO2 and SUMO3, which may regulate the level of functional Cx43 gap junctions at the plasma membrane. May be desumoylated by SENP1 or SENP2. Post-translationally, S-nitrosylation at Cys-271 is enriched at the muscle endothelial gap junction in arteries, it augments channel permeability and may regulate of smooth muscle cell to endothelial cell communication. Acetylated in the developing cortex; leading to delocalization from the cell membrane. Detected in ventricle and atrium (at protein level).

The protein localises to the cell membrane. Its subcellular location is the cell junction. It is found in the gap junction. It localises to the endoplasmic reticulum. Gap junction protein that acts as a regulator of bladder capacity. A gap junction consists of a cluster of closely packed pairs of transmembrane channels, the connexons, through which materials of low MW diffuse from one cell to a neighboring cell. Negative regulator of bladder functional capacity: acts by enhancing intercellular electrical and chemical transmission, thus sensitizing bladder muscles to cholinergic neural stimuli and causing them to contract. May play a role in cell growth inhibition through the regulation of NOV expression and localization. Plays an essential role in gap junction communication in the ventricles. The protein is Gap junction alpha-1 protein (Gja1) of Rattus norvegicus (Rat).